The following is a 1124-amino-acid chain: Zinc finger E-box-binding homeobox 1 (1124 aa).

Disordered stretches follow at residues 1-124 (MADG…NHDP) and 142-163 (APEEDQRQGTPEASGHDENGTP). Over residues 18–30 (NNVTNYNTVVETN) the composition is skewed to low complexity. Ser-31 and Ser-33 each carry phosphoserine. Residues 44–62 (EESVTDAADCEGVPEDDLP) show a composition bias toward acidic residues. A compositionally biased stretch (basic and acidic residues) spans 72–91 (SSEREGNAKNCWEDDRKEGQ). Residues 170–193 (LTCPYCDRGYKRFTSLKEHIKYRH) form a C2H2-type 1 zinc finger. Residues Lys-186 and Lys-195 each participate in a glycyl lysine isopeptide (Lys-Gly) (interchain with G-Cter in SUMO2) cross-link. 2 C2H2-type zinc fingers span residues 200-222 (FSCSLCSYTFAYRTQLERHMTSH) and 240-262 (FKCTECGKAFKYKHHLKEHLRIH). The C2H2-type 4; atypical zinc finger occupies 268-292 (YECPNCKKRFSHSGSYSSHISSKKC). Residues 304 to 327 (TGLKTSQCSSPSLSASPGSPTRPQ) form a disordered region. Lys-307 participates in a covalent cross-link: Glycyl lysine isopeptide (Lys-Gly) (interchain with G-Cter in SUMO2). A compositionally biased stretch (low complexity) spans 309 to 322 (SQCSSPSLSASPGS). A phosphoserine mark is found at Ser-313 and Ser-322. Glycyl lysine isopeptide (Lys-Gly) (interchain with G-Cter in SUMO2) cross-links involve residues Lys-331 and Lys-335. A Glycyl lysine isopeptide (Lys-Gly) (interchain with G-Cter in SUMO); alternate cross-link involves residue Lys-347. Lys-347 participates in a covalent cross-link: Glycyl lysine isopeptide (Lys-Gly) (interchain with G-Cter in SUMO2); alternate. Residues Lys-439, Lys-493, Lys-504, Lys-515, Lys-548, and Lys-553 each participate in a glycyl lysine isopeptide (Lys-Gly) (interchain with G-Cter in SUMO2) cross-link. Disordered stretches follow at residues 551-586 (DLKQPTQPPPLPAAEAEKPESSVSSATGDGNLSPSQ) and 636-714 (QISV…SSSR). Residues 581–640 (NLSPSQPPLKNLLSLLKAYYALNAQPSAEELSKIADSVNLPLDVVKKWFEKMQAGQISVQ) constitute a DNA-binding region (homeobox; atypical). A phosphoserine mark is found at Ser-642, Ser-679, Ser-686, Ser-693, and Ser-700. Residues 656 to 687 (AKNNDQPQSANANEPQDSTVNLQSPLKMTNSP) show a composition bias toward polar residues. Positions 692 to 714 (GSTTNGSRSSTPSPSPLNLSSSR) are enriched in low complexity. Thr-702 bears the Phosphothreonine mark. Phosphoserine is present on Ser-704. Residue Lys-774 forms a Glycyl lysine isopeptide (Lys-Gly) (interchain with G-Cter in SUMO); alternate linkage. Lys-774 participates in a covalent cross-link: Glycyl lysine isopeptide (Lys-Gly) (interchain with G-Cter in SUMO2); alternate. A disordered region spans residues 856-898 (PPLKVIQPNGNQDERQDTSSEGVSNVEDQNDSDSTPPKKKMRK). Residues 874–890 (SSEGVSNVEDQNDSDST) show a composition bias toward polar residues. 2 consecutive C2H2-type zinc fingers follow at residues 904-926 (YACDLCDKIFQKSSSLLRHKYEH) and 932-954 (HECGICKKAFKHKHHLIEHMRLH). The segment at 960 to 981 (YQCDKCGKRFSHSGSYSQHMNH) adopts a C2H2-type 7; atypical zinc-finger fold. The interval 989 to 1124 (EAEERDSTEQ…QVSEEKTNEA (136 aa)) is disordered. 2 stretches are compositionally biased toward acidic residues: residues 1031–1052 (EEDEDSEKEEEEEDKEMEELQE) and 1062–1084 (DEEEEEEEEEVEEEEVEEAENEG). Positions 1085–1099 (EEAKTEGLMKDDRAE) are enriched in basic and acidic residues. Over residues 1100 to 1115 (SQASSLGQKVGESSEQ) the composition is skewed to polar residues.

The protein belongs to the delta-EF1/ZFH-1 C2H2-type zinc-finger family. As to quaternary structure, interacts (via N-terminus) with SMARCA4/BRG1. In terms of processing, ubiquitinated, leading to degradation in a proteasome-dependent manner. Deubiquitinated by USP51, leading to stabilization. In terms of tissue distribution, colocalizes with SMARCA4/BRG1 in E-cadherin-negative cells from established lines, and stroma of normal colon as well as in de-differentiated epithelial cells at the invasion front of colorectal carcinomas (at protein level). Expressed in heart and skeletal muscle, but not in liver, spleen, or pancreas.

It localises to the nucleus. Its function is as follows. Acts as a transcriptional repressor. Inhibits interleukin-2 (IL-2) gene expression. Enhances or represses the promoter activity of the ATP1A1 gene depending on the quantity of cDNA and on the cell type. Represses E-cadherin promoter and induces an epithelial-mesenchymal transition (EMT) by recruiting SMARCA4/BRG1. Represses BCL6 transcription in the presence of the corepressor CTBP1. Positively regulates neuronal differentiation. Represses RCOR1 transcription activation during neurogenesis. Represses transcription by binding to the E box (5'-CANNTG-3'). In the absence of TGFB1, acts as a repressor of COL1A2 transcription via binding to the E-box in the upstream enhancer region. The polypeptide is Zinc finger E-box-binding homeobox 1 (Homo sapiens (Human)).